Consider the following 188-residue polypeptide: Insulin-like growth factor 1 (188 aa).

The tract at residues 45-73 (GPETLCGAELVDTLQFVCGERGFYFSKPT) is b. 3 disulfides stabilise this stretch: Cys50–Cys92, Cys62–Cys105, and Cys91–Cys96. Positions 74-85 (GYGPSSRRSHNR) are c. Positions 86–106 (GIVDECCFQSCELRRLEMYCA) are a. The tract at residues 107 to 114 (PVKSGKAA) is d. Positions 115-188 (RSVRAQRHTD…GNTGGRNYRM (74 aa)) are cleaved as a propeptide — e peptide. Residues 115–188 (RSVRAQRHTD…GNTGGRNYRM (74 aa)) form a disordered region. A compositionally biased stretch (basic and acidic residues) spans 140–153 (RGTERRTAQHPDKT).

The protein belongs to the insulin family. As to expression, all the isoforms are expressed in embryos, juvenile and adult liver, muscle and brain. At least one isoform is expressed in heart, kidney, testes, ovary, adipose tissue and spleen of juvenile salmon.

It localises to the secreted. Functionally, the insulin-like growth factors, isolated from plasma, are structurally and functionally related to insulin but have a much higher growth-promoting activity. Acts as a ligand for IGF1R. Binds to the alpha subunit of IGF1R, leading to the activation of the intrinsic tyrosine kinase activity which autophosphorylates tyrosine residues in the beta subunit thus initiatiating a cascade of down-stream signaling events leading to activation of the PI3K-AKT/PKB and the Ras-MAPK pathways. Binds to integrins. Its binding to integrins and subsequent ternary complex formation with integrins and IGFR1 are essential for IGF1 signaling. The chain is Insulin-like growth factor 1 from Oncorhynchus kisutch (Coho salmon).